A 325-amino-acid chain; its full sequence is MRLPTLFMLAAIATASPMSDLNRREMTRRQAAESCPIGYCTQNGGTTGGTAGDTVTVTDLAGLTEAAENETPLTIIVSGAISGSAKIRVASDKTIYGETGSSITGVGFYIRRVSNVIMRNLKIGQVDADNGDAIGIDESTNVWVDHCDLSGDLSAGKDDLDGLLDITHGAEWITVSNTYFHDHWKGSLIGHSDSNEGEDLGHLHITYANNYWYNVNSRTPSIRFGTVHIINNYWDNLLLTGVNCRMDAQVLVQSSAFSNCPDEAIFFADSDYTGYAVVDDVDLGGSTNSVPEGTLTPSSLPYDAIEAIGSAQIATTIPGTAGQKL.

The signal sequence occupies residues 1-15; that stretch reads MRLPTLFMLAAIATA. Ca(2+)-binding residues include Asp-132, Asp-161, and Asp-165. Arg-218 is an active-site residue.

Belongs to the polysaccharide lyase 1 family. Ca(2+) is required as a cofactor.

Its subcellular location is the secreted. The catalysed reaction is Eliminative cleavage of (1-&gt;4)-alpha-D-galacturonan to give oligosaccharides with 4-deoxy-alpha-D-galact-4-enuronosyl groups at their non-reducing ends.. Pectinolytic enzyme consist of four classes of enzymes: pectin lyase, polygalacturonase, pectin methylesterase and rhamnogalacturonase. Among pectinolytic enzymes, pectin lyase is the most important in depolymerization of pectin, since it cleaves internal glycosidic bonds of highly methylated pectins. Favors pectate, the anion, over pectin, the methyl ester. This is Probable pectate lyase B (plyB) from Aspergillus terreus (strain NIH 2624 / FGSC A1156).